Reading from the N-terminus, the 186-residue chain is Homeobox expressed in ES cells 1 (186 aa).

The segment at residues 109–168 (GRRPRTAFTRSQIEILENVFRVNSYPGIDIREELAGKLALDEDRIQIWFQNRRAKLKRSH) is a DNA-binding region (homeobox).

Belongs to the ANF homeobox family. As to quaternary structure, interacts (via N-terminus) with zyx.

It localises to the nucleus. Functionally, regulates the earliest stages of development of the anterior neural plate. Plays a role in forebrain development by inhibiting the expression of otx2 and pax6 in the rostral region of the anterior neural plate. Necessary for both neural differentiation and neural patterning. Controls Spemann organizer development. May act as a transcriptional repressor. This Xenopus tropicalis (Western clawed frog) protein is Homeobox expressed in ES cells 1.